The following is a 376-amino-acid chain: Alanine racemase (376 aa).

Residue lysine 40 is the Proton acceptor; specific for D-alanine of the active site. Lysine 40 is modified (N6-(pyridoxal phosphate)lysine). Arginine 138 is a substrate binding site. Tyrosine 270 functions as the Proton acceptor; specific for L-alanine in the catalytic mechanism. Methionine 317 provides a ligand contact to substrate.

This sequence belongs to the alanine racemase family. Pyridoxal 5'-phosphate serves as cofactor.

It catalyses the reaction L-alanine = D-alanine. The protein operates within amino-acid biosynthesis; D-alanine biosynthesis; D-alanine from L-alanine: step 1/1. In terms of biological role, catalyzes the interconversion of L-alanine and D-alanine. May also act on other amino acids. The sequence is that of Alanine racemase (alr) from Lactobacillus delbrueckii subsp. bulgaricus (strain ATCC 11842 / DSM 20081 / BCRC 10696 / JCM 1002 / NBRC 13953 / NCIMB 11778 / NCTC 12712 / WDCM 00102 / Lb 14).